Here is a 574-residue protein sequence, read N- to C-terminus: MYND-type zinc finger protein C31F10.10c (574 aa).

2 disordered regions span residues D207–R253 and M283–D307. Polar residues-rich tracts occupy residues I243–R253 and M283–T301. The segment at N482–C523 adopts an MYND-type; degenerate zinc-finger fold. Zn(2+)-binding residues include C498, C501, H519, and C523. The interval K534–L574 is disordered. Low complexity predominate over residues S542 to V556. A compositionally biased stretch (polar residues) spans E562–L574.

The protein belongs to the MUB1/samB family.

The protein resides in the nucleus. The protein localises to the cytoplasm. Its subcellular location is the cytoskeleton. It localises to the microtubule organizing center. It is found in the spindle pole body. The protein is MYND-type zinc finger protein C31F10.10c of Schizosaccharomyces pombe (strain 972 / ATCC 24843) (Fission yeast).